A 496-amino-acid chain; its full sequence is MQVRVLDTTLRDGEQTPGVSLTPEEKLRIALKIDALGADIIEAGSAITSEGEREGIRKITSEGLRAEICSFARAVREDIDAAISCDVDSVHLVVPTSDLHLEHKLRKTREEVLEQAVDCTEYAVDHGILVELSAEDSTRSDMDFLRTIFREGIEAGAERICACDTVGILTPERSYEFYRGLSELGAPLSVHCHNDFGLAVANSLAGLRAGASEVHATINGIGERAGNAALEEVVVALKSLYDVDTSINIEMLYETSRMVARMTGVYLQPNKAIVGENAFAHESGIHADGVLKKAETYEPITPEMVGHGRGFVMGKHIGTHALRKRLDELGMKVADDKLMEIFRRVKTLGDMGKCVTDVDLQAIAEDVLGVMEDKVVDLQEVTIVSGNRVTPTASVKLRVDDREVLEAGTGVGPVDAAIVAIKKSLEDFADITLEEYHVDAITGGTDALIDVVIKLRHGDRIISARSTQPDIIMASVEAFLSGVNRLLANEKSEGTH.

One can recognise a Pyruvate carboxyltransferase domain in the interval 3-253 (VRVLDTTLRD…DTSINIEMLY (251 aa)).

The protein belongs to the alpha-IPM synthase/homocitrate synthase family. As to quaternary structure, homodimer.

The catalysed reaction is pyruvate + acetyl-CoA + H2O = (3R)-citramalate + CoA + H(+). Its pathway is amino-acid biosynthesis; L-isoleucine biosynthesis; 2-oxobutanoate from pyruvate: step 1/3. In terms of biological role, catalyzes the condensation of pyruvate and acetyl-coenzyme A to form (R)-citramalate. This Methanothermobacter thermautotrophicus (strain ATCC 29096 / DSM 1053 / JCM 10044 / NBRC 100330 / Delta H) (Methanobacterium thermoautotrophicum) protein is Putative (R)-citramalate synthase CimA.